The following is a 399-amino-acid chain: Telomeric repeat-binding factor 2-interacting protein 1 (399 aa).

The tract at residues 1–21 is disordered; sequence MAEAMELGKDPNGPTHSSTLF. Alanine 2 carries the N-acetylalanine modification. One can recognise a BRCT domain in the interval 10-101; the sequence is DPNGPTHSST…EKLELEAYRL (92 aa). Phosphoserine occurs at positions 36 and 43. Residue lysine 114 forms a Glycyl lysine isopeptide (Lys-Gly) (interchain with G-Cter in SUMO2) linkage. The region spanning 130–190 is the Myb-like domain; the sequence is QSQAGRMVFT…SMKDRYLKRL (61 aa). Phosphoserine is present on residues serine 156 and serine 158. Residue lysine 196 forms a Glycyl lysine isopeptide (Lys-Gly) (interchain with G-Cter in SUMO2) linkage. Disordered stretches follow at residues 199 to 245 and 279 to 309; these read LGEA…KEEI and TMCDDDPCTPEEDSETQPDEEEEEEEKVSAP. Phosphoserine occurs at positions 205 and 208. Residues lysine 210, lysine 214, and lysine 242 each participate in a glycyl lysine isopeptide (Lys-Gly) (interchain with G-Cter in SUMO2) cross-link. The span at 281–304 shows a compositional bias: acidic residues; sequence CDDDPCTPEEDSETQPDEEEEEEE. Lysine 372 participates in a covalent cross-link: Glycyl lysine isopeptide (Lys-Gly) (interchain with G-Cter in SUMO2). The Nuclear localization signal signature appears at 383–399; sequence KKFGAQNVARRIEFRKK.

It belongs to the RAP1 family. Associates with the I-kappa-B-kinase (IKK) core complex, composed of CHUK, IKBKB and IKBKG. Homodimer. Component of the shelterin complex (telosome) composed of TERF1, TERF2, TINF2, TERF2IP ACD and POT1. Interacts with TERF2 (but not TERF1) with its C-terminus. Interacts with SLX4/BTBD12. Interacts with TERF2; the interaction is direct.

It localises to the nucleus. It is found in the cytoplasm. The protein localises to the chromosome. The protein resides in the telomere. Functionally, acts both as a regulator of telomere function and as a transcription regulator. Involved in the regulation of telomere length and protection as a component of the shelterin complex (telosome). In contrast to other components of the shelterin complex, it is dispensible for telomere capping and does not participate in the protection of telomeres against non-homologous end-joining (NHEJ)-mediated repair. Instead, it is required to negatively regulate telomere recombination and is essential for repressing homology-directed repair (HDR), which can affect telomere length. Does not bind DNA directly: recruited to telomeric double-stranded 5'-TTAGGG-3' repeats via its interaction with TERF2. Independently of its function in telomeres, also acts as a transcription regulator: recruited to extratelomeric 5'-TTAGGG-3' sites via its association with TERF2 or other factors, and regulates gene expression. When cytoplasmic, associates with the I-kappa-B-kinase (IKK) complex and acts as a regulator of the NF-kappa-B signaling by promoting IKK-mediated phosphorylation of RELA/p65, leading to activate expression of NF-kappa-B target genes. The chain is Telomeric repeat-binding factor 2-interacting protein 1 (TERF2IP) from Bos taurus (Bovine).